The chain runs to 90 residues: Small ribosomal subunit protein bS16 (90 aa).

This sequence belongs to the bacterial ribosomal protein bS16 family.

This Oceanobacillus iheyensis (strain DSM 14371 / CIP 107618 / JCM 11309 / KCTC 3954 / HTE831) protein is Small ribosomal subunit protein bS16.